We begin with the raw amino-acid sequence, 20 residues long: Small ribosomal subunit protein bS20 (20 aa).

The protein belongs to the bacterial ribosomal protein bS20 family.

Functionally, binds directly to 16S ribosomal RNA. This Brevundimonas diminuta (Pseudomonas diminuta) protein is Small ribosomal subunit protein bS20 (rpsT).